The chain runs to 515 residues: ATP-dependent RNA helicase DBP3 (515 aa).

A disordered region spans residues 1 to 67 (MAKRPLQTEA…SDSRYLPTPE (67 aa)). The short motif at 100–127 (TSFSFLPESSNDLYLPLEKFSSPTPIQA) is the Q motif element. One can recognise a Helicase ATP-binding domain in the interval 130–306 (WPLAFAGRDL…ASFTKNPVTV (177 aa)). 143 to 150 (AETGSGKT) lines the ATP pocket. The DEAD box motif lies at 252 to 255 (DEAD). In terms of domain architecture, Helicase C-terminal spans 335–484 (RLLELLRRYQ…DVPESLLKFG (150 aa)).

It belongs to the DEAD box helicase family. DDX5/DBP2 subfamily.

It localises to the nucleus. It is found in the nucleolus. It catalyses the reaction ATP + H2O = ADP + phosphate + H(+). ATP-dependent RNA helicase required for 60S ribosomal subunit synthesis. Involved in efficient pre-rRNA processing, predominantly at site A3, which is necessary for the normal formation of 25S and 5.8S rRNAs. The protein is ATP-dependent RNA helicase DBP3 (DBP3) of Coccidioides immitis (strain RS) (Valley fever fungus).